Reading from the N-terminus, the 287-residue chain is 4-hydroxybenzoate octaprenyltransferase (287 aa).

6 helical membrane passes run 23-40 (IGSL…WLAG), 98-118 (ILFV…NKMT), 141-161 (LPQF…YAAV), 163-183 (ESLP…TVAY), 213-233 (IIIG…GNIT), and 235-255 (LGIP…YQQI).

Belongs to the UbiA prenyltransferase family. It depends on Mg(2+) as a cofactor.

The protein localises to the cell inner membrane. It carries out the reaction all-trans-octaprenyl diphosphate + 4-hydroxybenzoate = 4-hydroxy-3-(all-trans-octaprenyl)benzoate + diphosphate. The protein operates within cofactor biosynthesis; ubiquinone biosynthesis. In terms of biological role, catalyzes the prenylation of para-hydroxybenzoate (PHB) with an all-trans polyprenyl group. Mediates the second step in the final reaction sequence of ubiquinone-8 (UQ-8) biosynthesis, which is the condensation of the polyisoprenoid side chain with PHB, generating the first membrane-bound Q intermediate 3-octaprenyl-4-hydroxybenzoate. This Pectobacterium atrosepticum (strain SCRI 1043 / ATCC BAA-672) (Erwinia carotovora subsp. atroseptica) protein is 4-hydroxybenzoate octaprenyltransferase.